The following is a 71-amino-acid chain: Protein MTH_1184 (71 aa).

The protein is Protein MTH_1184 of Methanothermobacter thermautotrophicus (strain ATCC 29096 / DSM 1053 / JCM 10044 / NBRC 100330 / Delta H) (Methanobacterium thermoautotrophicum).